The primary structure comprises 95 residues: Exodeoxyribonuclease 7 small subunit (95 aa).

A compositionally biased stretch (basic and acidic residues) spans 62 to 83 (LTKDESKKTNKTGFRGESKTTE). Residues 62 to 95 (LTKDESKKTNKTGFRGESKTTETKNNTAQEEDLF) are disordered.

The protein belongs to the XseB family. Heterooligomer composed of large and small subunits.

Its subcellular location is the cytoplasm. It catalyses the reaction Exonucleolytic cleavage in either 5'- to 3'- or 3'- to 5'-direction to yield nucleoside 5'-phosphates.. Functionally, bidirectionally degrades single-stranded DNA into large acid-insoluble oligonucleotides, which are then degraded further into small acid-soluble oligonucleotides. This Leptospira interrogans serogroup Icterohaemorrhagiae serovar copenhageni (strain Fiocruz L1-130) protein is Exodeoxyribonuclease 7 small subunit.